The following is a 348-amino-acid chain: Probable dual-specificity RNA methyltransferase RlmN (348 aa).

E89 (proton acceptor) is an active-site residue. Positions H95–K328 constitute a Radical SAM core domain. A disulfide bond links C102 and C333. 3 residues coordinate [4Fe-4S] cluster: C109, C113, and C116. Residues G159–E160, S191, S214–H216, and N290 contribute to the S-adenosyl-L-methionine site. The S-methylcysteine intermediate role is filled by C333.

Belongs to the radical SAM superfamily. RlmN family. Requires [4Fe-4S] cluster as cofactor.

It is found in the cytoplasm. The enzyme catalyses adenosine(2503) in 23S rRNA + 2 reduced [2Fe-2S]-[ferredoxin] + 2 S-adenosyl-L-methionine = 2-methyladenosine(2503) in 23S rRNA + 5'-deoxyadenosine + L-methionine + 2 oxidized [2Fe-2S]-[ferredoxin] + S-adenosyl-L-homocysteine. It catalyses the reaction adenosine(37) in tRNA + 2 reduced [2Fe-2S]-[ferredoxin] + 2 S-adenosyl-L-methionine = 2-methyladenosine(37) in tRNA + 5'-deoxyadenosine + L-methionine + 2 oxidized [2Fe-2S]-[ferredoxin] + S-adenosyl-L-homocysteine. Specifically methylates position 2 of adenine 2503 in 23S rRNA and position 2 of adenine 37 in tRNAs. This Dictyoglomus turgidum (strain DSM 6724 / Z-1310) protein is Probable dual-specificity RNA methyltransferase RlmN.